Consider the following 2204-residue polypeptide: Non-reducing polyketide synthase CTB1 (2204 aa).

Positions 11 to 250 (AFGDQTYDCS…TRLPITAPYH (240 aa)) are N-terminal acylcarrier protein transacylase domain (SAT). The Ketosynthase family 3 (KS3) domain occupies 382-815 (KSPIAILAAS…GGNTCLVLED (434 aa)). Catalysis depends on for beta-ketoacyl synthase activity residues Cys-554, His-689, and His-734. The interval 923-1224 (AFTGQGSAFE…QTFASINKDK (302 aa)) is malonyl-CoA:ACP transacylase (MAT) domain. The interval 1299-1619 (SSSIHKVITN…VPKRLMHYIV (321 aa)) is product template (PT) domain. Residues 1303–1439 (HKVITNTITA…CKIRFGSLEK (137 aa)) are N-terminal hotdog fold. Residues 1303 to 1616 (HKVITNTITA…LQGVPKRLMH (314 aa)) enclose the PKS/mFAS DH domain. The Proton acceptor; for dehydratase activity role is filled by His-1336. The interval 1468–1616 (TYRFSKGMIY…LQGVPKRLMH (149 aa)) is C-terminal hotdog fold. The active-site Proton donor; for dehydratase activity is Asp-1528. The tract at residues 1625–1674 (KASGPPTEKKGSSPPVEKKASAPVAPTRPAIQRKNASIPPPATQVTPQNK) is disordered. Residues 1631–1644 (TEKKGSSPPVEKKA) are compositionally biased toward basic and acidic residues. Carrier domains are found at residues 1679-1756 (PSVS…TRLS) and 1783-1865 (DPSP…SGST). O-(pantetheine 4'-phosphoryl)serine occurs at positions 1716 and 1824. Residues 1864-1875 (STESFDSTTTKP) show a composition bias toward polar residues. A disordered region spans residues 1864-1931 (STESFDSTTT…PPKGRIPPAW (68 aa)). Residues 1880–1895 (ATPPLTDSSASSPPSS) show a composition bias toward low complexity. The segment at 1945-2195 (ILFLFPDGAG…SGAQMLVEHM (251 aa)) is thioesterase (TE) domain.

It depends on pantetheine 4'-phosphate as a cofactor.

It carries out the reaction 6 malonyl-CoA + acetyl-CoA + 6 H(+) = nor-toralactone + 6 CO2 + 7 CoA + 2 H2O. It functions in the pathway mycotoxin biosynthesis. Functionally, polyketide synthase; part of the gene cluster that mediates the biosynthesis of cercosporin, a light-activated, non-host-selective toxin. The perylenequinone chromophore of cercosporin absorbs light energy to attain an electronically-activated triplet state and produces active oxygen species such as the hydroxyl radical, superoxide, hydrogen peroxide or singlet oxygen upon reaction with oxygen molecules. These reactive oxygen species cause damage to various cellular components including lipids, proteins and nucleic acids. The first step of cercosporin biosynthesis is performed by the polyketide synthase CTB1 which catalyzes the formation of nor-toralactone. The starter unit acyltransferase (SAT) domain of CTB1 initiates polyketide extension by the selective utilization of acetyl-CoA, which is elongated to the heptaketide in the beta-ketoacyl synthase (KS) domain by successive condensations with six malonyl units introduced by the malonyl acyltransferase (MAT) domain. The product template (PT) domain catalyzes C4-C9 and C2-C11 aldol cyclizations and dehydrations to a trihydroxynaphthalene, which is thought to be delivered to the thioesterase (TE) domain for product release. The bifunctional enzyme CTB3 then methylates nor-toralactone to toralactone before conducting an unusual oxidative aromatic ring opening. The O-methyltransferase CTB2 further methylates the nascent OH-6 of the CBT3 product, blocking further oxidation at this site before the reductase CTB6 reduces the 2-oxopropyl ketone at position C7, giving naphthalene. The FAD-dependent monooxygenase CTB5 in concert with the multicopper oxidase CTB12 are responsible for homodimerization of naphthalene with CTB7 installing the dioxepine moiety, finally producing cercosporin. The fasciclin domain-containing protein CTB11 might act with CTB5 and CTB12 whereas the roles of CTB9 and CTB10 have still to be elucidated. The sequence is that of Non-reducing polyketide synthase CTB1 from Cercospora beticola (Sugarbeet leaf spot fungus).